Consider the following 272-residue polypeptide: Shikimate dehydrogenase (NADP(+)) (272 aa).

Shikimate is bound by residues 14–16 (SKS) and threonine 61. Lysine 65 (proton acceptor) is an active-site residue. Glutamate 77 is a binding site for NADP(+). Residues asparagine 86 and aspartate 102 each contribute to the shikimate site. Residues 126 to 130 (GAGGA), 149 to 154 (NRTVSR), and methionine 213 contribute to the NADP(+) site. Tyrosine 215 is a shikimate binding site. Glycine 237 lines the NADP(+) pocket.

It belongs to the shikimate dehydrogenase family. As to quaternary structure, homodimer.

The catalysed reaction is shikimate + NADP(+) = 3-dehydroshikimate + NADPH + H(+). Its pathway is metabolic intermediate biosynthesis; chorismate biosynthesis; chorismate from D-erythrose 4-phosphate and phosphoenolpyruvate: step 4/7. Involved in the biosynthesis of the chorismate, which leads to the biosynthesis of aromatic amino acids. Catalyzes the reversible NADPH linked reduction of 3-dehydroshikimate (DHSA) to yield shikimate (SA). The polypeptide is Shikimate dehydrogenase (NADP(+)) (Shigella dysenteriae serotype 1 (strain Sd197)).